Here is a 310-residue protein sequence, read N- to C-terminus: Vomeronasal type-1 receptor 93 (310 aa).

Topologically, residues 1 to 20 (MNKDNTLHVDTIMKITMFSE) are extracellular. Residues 21–41 (VSVGILANSILFFAHLCMLLG) form a helical membrane-spanning segment. Residues 42–59 (ENKPKPIHLYIASLSLTQ) are Cytoplasmic-facing. A helical membrane pass occupies residues 60–80 (LMLLITMGLIAADMFISQGIW). The Extracellular portion of the chain corresponds to 81-93 (DSTSCQSLIYLHR). Cysteine 85 and cysteine 172 are joined by a disulfide. Residues 94 to 114 (LSRGFTLSAACLLNVFWMITL) form a helical membrane-spanning segment. Over 115–134 (SSKKSRLTKFKHNSPHHISG) the chain is Cytoplasmic. Residues 135–155 (AFLLLCVLYMCFSSHLILSII) form a helical membrane-spanning segment. Residues 156 to 193 (ATPNLTSDNFMYVTKSCSFLPMCYSRTSMFSTTIAVRE) lie on the Extracellular side of the membrane. Residue asparagine 159 is glycosylated (N-linked (GlcNAc...) asparagine). A helical membrane pass occupies residues 194 to 214 (AFFIGLMALSSGYLVAFLWRH). The Cytoplasmic segment spans residues 215 to 238 (RKQAQHLHSTGLSSKASPEQRATE). The chain crosses the membrane as a helical span at residues 239–259 (TILLLMSFFVVLYILENVVFY). Over 260-269 (SRMKFKDGST) the chain is Extracellular. A helical transmembrane segment spans residues 270-290 (FYCVQIIVSHSYATVSSFVFI). Residues 291 to 310 (FTEKRMTKILRSVCTRIINI) lie on the Cytoplasmic side of the membrane.

It belongs to the G-protein coupled receptor 1 family. As to expression, expressed in 1-4% of neurons of the vomeronasal organ. Only one pheromone receptor gene may be expressed in a particular neuron. Not expressed in the main olfactory epithelium.

It localises to the cell membrane. In terms of biological role, putative pheromone receptor implicated in the regulation of social as well as reproductive behavior. The chain is Vomeronasal type-1 receptor 93 (Vom1r93) from Rattus norvegicus (Rat).